The following is a 444-amino-acid chain: Vacuolar protein sorting-associated protein 4B (444 aa).

Residues 4–82 (TNTNLQKAID…KEYLKKKEKK (79 aa)) form the MIT domain. Positions 19–82 (AQEDKAGNYE…KEYLKKKEKK (64 aa)) form a coiled coil. Residues 77–118 (KKKEKKPQKPVKEEQSGPVDEKGNDSDGEAESDDPEKKKLQN) form a disordered region. Over residues 86–101 (PVKEEQSGPVDEKGND) the composition is skewed to basic and acidic residues. Residues Ser102 and Ser108 each carry the phosphoserine modification. 174 to 181 (GPPGTGKS) lines the ATP pocket. Ser410 is subject to Phosphoserine.

Belongs to the AAA ATPase family. As to quaternary structure, proposed to be monomeric or homodimeric in nucleotide-free form and to oligomerize upon binding to ATP to form two stacked hexameric or heptameric rings with a central pore through which ESCRT-III substrates are translocated in an ATP-dependent manner. In vitro, associates on the inside of a helical tubular structure formed by a CHMP2A-CHMP3 polymer. Interacts with CHMP1A, CHMP1B, CHMP4B and CHMP6. Interacts with CHMP2A. Interacts with VPS4A; the interaction suggests a heteromeric assembly with VPS4A. Interacts with VTA1. In terms of tissue distribution, high level expression seen in the kidney. It is also expressed in the heart, brain, spleen, lung, liver, skeletal muscle, and testis.

The protein resides in the late endosome membrane. It catalyses the reaction ATP + H2O = ADP + phosphate + H(+). Its function is as follows. Involved in late steps of the endosomal multivesicular bodies (MVB) pathway. Recognizes membrane-associated ESCRT-III assemblies and catalyzes their disassembly, possibly in combination with membrane fission. Redistributes the ESCRT-III components to the cytoplasm for further rounds of MVB sorting. MVBs contain intraluminal vesicles (ILVs) that are generated by invagination and scission from the limiting membrane of the endosome and mostly are delivered to lysosomes enabling degradation of membrane proteins, such as stimulated growth factor receptors, lysosomal enzymes and lipids. VPS4A/B are required for the exosomal release of SDCBP, CD63 and syndecan. In terms of biological role, (Microbial infection) In conjunction with the ESCRT machinery also appears to function in topologically equivalent membrane fission events, such as the terminal stages of cytokinesis and enveloped virus budding (lentiviruses). The sequence is that of Vacuolar protein sorting-associated protein 4B from Mus musculus (Mouse).